A 488-amino-acid chain; its full sequence is PPE family protein PPE10 (488 aa).

Disordered stretches follow at residues 207-232 and 443-488; these read NNNWGSGNTGSSNVGTGNTGSSNIGS and SDAG…LRTE.

It belongs to the mycobacterial PPE family.

It localises to the secreted. In terms of biological role, plays a major role in the integrity and stability of the capsule. The sequence is that of PPE family protein PPE10 from Mycobacterium marinum (strain ATCC BAA-535 / M).